The following is a 501-amino-acid chain: Dipeptide and tripeptide permease A (501 aa).

Over 1–21 (MSTANNKPAESVSLNAFKQPR) the chain is Cytoplasmic. Residues 22 to 44 (AFYLIFSIELWERFGYYGLQGIM) form a helical membrane-spanning segment. Residues 45–59 (AVYLVKQLGMSEADS) are Periplasmic-facing. Residues 60–80 (ITLFSSFSALVYGLVAIGGWL) traverse the membrane as a helical segment. Over 81–89 (GDKVLGTKR) the chain is Cytoplasmic. A helical membrane pass occupies residues 90–110 (VIMLGAIVLAIGYALVAWSGH). Position 111 (aspartate 111) is a topological domain, periplasmic. A helical membrane pass occupies residues 112–132 (AAIVYMGMATIAVGNGLFKAN). Residues 133-153 (PSSLLSTCYDKNDPRLDGAFT) are Cytoplasmic-facing. Residues 154-174 (MYYMSINIGSFFSMLATPWLA) form a helical membrane-spanning segment. The Periplasmic segment spans residues 175–178 (ARFG). Residues 179–199 (WSVAFALSVVGMVITIINFAF) form a helical membrane-spanning segment. Topologically, residues 200 to 218 (CQKWVKQYGSKPDFAPVHM) are cytoplasmic. The helical transmembrane segment at 219-239 (GKLLATIAGVVVLVAIATWLL) threads the bilayer. Topologically, residues 240 to 246 (HNQGIAR) are periplasmic. The helical transmembrane segment at 247 to 267 (MVLGVVALGIVVIFAKETIGL) threads the bilayer. Topologically, residues 268–274 (KGAARRK) are cytoplasmic. A helical membrane pass occupies residues 275–295 (MIVAFLLMVEAIVFFVLYSQM). Residues 296 to 320 (PTSLNFFAIRNVEHSILGIAFEPEQ) lie on the Periplasmic side of the membrane. Residues 321 to 341 (YQALNPFWIMIGSPILAAIYN) traverse the membrane as a helical segment. At 342 to 352 (KMGDRLPMPHK) the chain is on the cytoplasmic side. Residues 353 to 373 (FAIGMVLCSGAFLVLPLGAKF) form a helical membrane-spanning segment. At 374 to 383 (ASDAGIVSVN) the chain is on the periplasmic side. The helical transmembrane segment at 384–404 (WLILSYALQSIGELMISGLGL) threads the bilayer. At 405-414 (AMVAQLVPQR) the chain is on the cytoplasmic side. A helical transmembrane segment spans residues 415 to 435 (LMGFIMGSWFLTTAGAAIIAG). At 436 to 459 (KIANLMAVPENVTDPLVSLEVYGH) the chain is on the periplasmic side. The chain crosses the membrane as a helical span at residues 460-480 (VFLQIGIVTAVIAALMLLTAP). Topologically, residues 481-501 (KLNRMTQDDSADLKARETAAA) are cytoplasmic.

The protein belongs to the major facilitator superfamily. Proton-dependent oligopeptide transporter (POT/PTR) (TC 2.A.17) family. DtpA subfamily.

The protein resides in the cell inner membrane. In terms of biological role, proton-dependent permease that transports di- and tripeptides. The chain is Dipeptide and tripeptide permease A from Klebsiella pneumoniae (strain 342).